The following is a 141-amino-acid chain: Large ribosomal subunit protein uL11c (141 aa).

This sequence belongs to the universal ribosomal protein uL11 family. As to quaternary structure, part of the ribosomal stalk of the 50S ribosomal subunit. Interacts with L10 and the large rRNA to form the base of the stalk. L10 forms an elongated spine to which L12 dimers bind in a sequential fashion forming a multimeric L10(L12)X complex.

It is found in the plastid. The protein localises to the chloroplast. Functionally, forms part of the ribosomal stalk which helps the ribosome interact with GTP-bound translation factors. The polypeptide is Large ribosomal subunit protein uL11c (Cyanidium caldarium (Red alga)).